The following is a 183-amino-acid chain: Non-specific lipid transfer protein GPI-anchored 15 (183 aa).

An N-terminal signal peptide occupies residues 1 to 24 (MGYRRSYAITFVALVAALWSVTKA). Disulfide bonds link Cys30/Cys71, Cys40/Cys55, Cys56/Cys97, and Cys69/Cys107. Residues Asn47 and Asn86 are each glycosylated (N-linked (GlcNAc...) asparagine). The interval 108-158 (NAATGPTAQPPAPSPTEKTPDVTLTPTSLPGARSGVGGGSKTVPSVGTGSS) is disordered. The segment covering 149–158 (TVPSVGTGSS) has biased composition (polar residues). A lipid anchor (GPI-anchor amidated serine) is attached at Ser158. The propeptide at 159–183 (SRNVDPLPLHFLMFAVLVVCTSSFL) is removed in mature form.

The protein belongs to the plant LTP family. Expressed in seedlings, preferentially in the endodermis of hypocotyls and roots. Also observed in siliques.

The protein resides in the cell membrane. Its function is as follows. Probable lipid transfer protein. This Arabidopsis thaliana (Mouse-ear cress) protein is Non-specific lipid transfer protein GPI-anchored 15.